Here is a 344-residue protein sequence, read N- to C-terminus: Sensor histidine kinase GraS (344 aa).

2 helical membrane passes run 18–38 (IFWI…DYDI) and 43–63 (IGFI…FTFL). Residues 126 to 332 (EFVHDIKTPV…TFVLTFPKQN (207 aa)) form the Histidine kinase domain. His129 carries the phosphohistidine; by autocatalysis modification.

Autophosphorylated.

It localises to the cell membrane. The enzyme catalyses ATP + protein L-histidine = ADP + protein N-phospho-L-histidine.. Its function is as follows. Member of the two-component regulatory system GraR/GraS involved in resistance against cationic antimicrobial peptides (CAMPs). GraS probably functions as a sensor protein kinase which is autophosphorylated at a histidine residue and transfers its phosphate group to GraR. This chain is Sensor histidine kinase GraS (graS), found in Staphylococcus haemolyticus (strain JCSC1435).